We begin with the raw amino-acid sequence, 321 residues long: Lipoyl synthase (321 aa).

[4Fe-4S] cluster is bound by residues C68, C73, C79, C94, C98, C101, and S308. In terms of domain architecture, Radical SAM core spans 80–297 (FNHGTATFMI…KAEAMAMGFT (218 aa)).

Belongs to the radical SAM superfamily. Lipoyl synthase family. It depends on [4Fe-4S] cluster as a cofactor.

The protein localises to the cytoplasm. The enzyme catalyses [[Fe-S] cluster scaffold protein carrying a second [4Fe-4S](2+) cluster] + N(6)-octanoyl-L-lysyl-[protein] + 2 oxidized [2Fe-2S]-[ferredoxin] + 2 S-adenosyl-L-methionine + 4 H(+) = [[Fe-S] cluster scaffold protein] + N(6)-[(R)-dihydrolipoyl]-L-lysyl-[protein] + 4 Fe(3+) + 2 hydrogen sulfide + 2 5'-deoxyadenosine + 2 L-methionine + 2 reduced [2Fe-2S]-[ferredoxin]. Its pathway is protein modification; protein lipoylation via endogenous pathway; protein N(6)-(lipoyl)lysine from octanoyl-[acyl-carrier-protein]: step 2/2. Functionally, catalyzes the radical-mediated insertion of two sulfur atoms into the C-6 and C-8 positions of the octanoyl moiety bound to the lipoyl domains of lipoate-dependent enzymes, thereby converting the octanoylated domains into lipoylated derivatives. The polypeptide is Lipoyl synthase (Cronobacter sakazakii (strain ATCC BAA-894) (Enterobacter sakazakii)).